The chain runs to 220 residues: UPF0319 protein YccT (220 aa).

A signal peptide spans 1–20 (MKTGALATFLALCLPVTVFA).

This sequence belongs to the UPF0319 family.

This Salmonella paratyphi A (strain ATCC 9150 / SARB42) protein is UPF0319 protein YccT.